The chain runs to 196 residues: HTH-type transcriptional regulator Hpr (196 aa).

The region spanning S13 to G157 is the HTH marR-type domain. Positions I63 to A86 form a DNA-binding region, H-T-H motif.

Homodimer.

In terms of biological role, negative regulator of protease production and sporulation. The polypeptide is HTH-type transcriptional regulator Hpr (Shouchella clausii (strain KSM-K16) (Alkalihalobacillus clausii)).